The following is a 773-amino-acid chain: 3-isopropylmalate dehydratase (773 aa).

[4Fe-4S] cluster-binding residues include cysteine 355, cysteine 415, and cysteine 418.

Belongs to the aconitase/IPM isomerase family. As to quaternary structure, monomer. It depends on [4Fe-4S] cluster as a cofactor.

It catalyses the reaction (2R,3S)-3-isopropylmalate = (2S)-2-isopropylmalate. It participates in amino-acid biosynthesis; L-leucine biosynthesis; L-leucine from 3-methyl-2-oxobutanoate: step 2/4. In terms of biological role, catalyzes the isomerization between 2-isopropylmalate and 3-isopropylmalate, via the formation of 2-isopropylmaleate. This is 3-isopropylmalate dehydratase (LEU1) from Mycosarcoma maydis (Corn smut fungus).